The chain runs to 423 residues: Major royal jelly protein 9 (423 aa).

The N-terminal stretch at 1-20 is a signal peptide; the sequence is MSFNIWWLILYFSIVCQAKA. 5 N-linked (GlcNAc...) asparagine glycosylation sites follow: Asn110, Asn118, Asn177, Asn196, and Asn345.

This sequence belongs to the major royal jelly protein family. As to expression, expressed at very low levels in the hypopharyngeal glands of adult worker bees (at protein level); expression peaks at 12 days post eclosion. Secreted into bee venom in the sting apparatus (at protein level). Expressed in the brains of adult worker bees peaking at 12 days post eclosion (at protein level). Expressed in the spermatheca of adult queen bees (at protein level); expression levels are higher in mated queens than in virgin queens. Along with Mrjp8 expressed at very low levels in the head of worker bees compared to other major royal jelly proteins.

It localises to the secreted. In terms of biological role, component of bee sting venom. Component of royal jelly, a substance produced in the hypopharyngeal gland containing proteins, free amino acids, fatty acids, sugars and other nutrients, which is fed to developing larvae by worker nurse bees; may be present only at trace levels. All larvae are fed some royal jelly (also known as worker jelly) early in their development but it forms the principal source of nutrition for larvae destined to become queen bees. Produced in the spermatheca of adult queen bees, along with other major royal jelly proteins, where it may act as a nutrient supply for sperm stored by mated queens, or be involved in energy metabolism. The chain is Major royal jelly protein 9 from Apis mellifera (Honeybee).